Reading from the N-terminus, the 125-residue chain is Protein ApaG (125 aa).

Positions methionine 1 to histidine 125 constitute an ApaG domain.

This is Protein ApaG from Escherichia coli (strain SE11).